Consider the following 240-residue polypeptide: MKPAYFISDLHLSEKHPELTALLLRFLRSSAAGQARAIYILGDLFDFWVGDDEVSELNTSVAREIRKLSDKGVAVFFVRGNRDFLIGQDFCRQAGMTLLPDYSVLDLFGCKTLICHGDTLCTDDRAYQRFRKIVHRKRLQKLFLMLPLKWRTRLAAKIRRVSKMEKQVKPADIMDVNAAFTARQVRAFNAERLIHGHTHREHIHHENGFTRIVLGDWHNDYASILRVDGDGAVFVPLEKY.

Positions 9, 11, 43, 81, and 116 each coordinate Mn(2+). Residue 81-82 coordinates substrate; that stretch reads NR. Residues Asp-124, Ser-162, Lys-166, Lys-169, and His-197 each contribute to the substrate site. 2 residues coordinate Mn(2+): His-197 and His-199.

The protein belongs to the LpxH family. The cofactor is Mn(2+).

Its subcellular location is the cell inner membrane. It carries out the reaction UDP-2-N,3-O-bis[(3R)-3-hydroxytetradecanoyl]-alpha-D-glucosamine + H2O = 2-N,3-O-bis[(3R)-3-hydroxytetradecanoyl]-alpha-D-glucosaminyl 1-phosphate + UMP + 2 H(+). It functions in the pathway glycolipid biosynthesis; lipid IV(A) biosynthesis; lipid IV(A) from (3R)-3-hydroxytetradecanoyl-[acyl-carrier-protein] and UDP-N-acetyl-alpha-D-glucosamine: step 4/6. In terms of biological role, hydrolyzes the pyrophosphate bond of UDP-2,3-diacylglucosamine to yield 2,3-diacylglucosamine 1-phosphate (lipid X) and UMP by catalyzing the attack of water at the alpha-P atom. Involved in the biosynthesis of lipid A, a phosphorylated glycolipid that anchors the lipopolysaccharide to the outer membrane of the cell. The protein is UDP-2,3-diacylglucosamine hydrolase of Neisseria meningitidis serogroup A / serotype 4A (strain DSM 15465 / Z2491).